The sequence spans 452 residues: Probable E3 ubiquitin-protein ligase ARI15 (452 aa).

The segment at 22-256 (SRVYCGICSN…GTSGSCLAPA (235 aa)) is TRIAD supradomain. Cysteine 26, cysteine 29, cysteine 54, histidine 56, cysteine 59, cysteine 62, cysteine 83, cysteine 88, cysteine 128, cysteine 133, cysteine 154, cysteine 156, cysteine 161, cysteine 164, histidine 169, cysteine 174, cysteine 208, cysteine 211, cysteine 229, cysteine 231, cysteine 236, cysteine 239, histidine 246, and cysteine 252 together coordinate Zn(2+). Residues 26 to 88 (CGICSNIGDD…TAISCPDRDC (63 aa)) form an RING-type 1 zinc finger. An IBR-type zinc finger spans residues 106 to 174 (AMYELYILKS…MLESHRPVTC (69 aa)). The RING-type 2; atypical zinc-finger motif lies at 208-239 (CPHCFIPVEIDGERPWAQFLTCVCSGRFCWKC). The segment at 414-445 (NYGGPYWLCDRCTYGNSWFQRACKMCCDPTAS) adopts a RanBP2-type zinc-finger fold.

Belongs to the RBR family. Ariadne subfamily. The cofactor is Zn(2+). In terms of tissue distribution, ubiquitous.

The catalysed reaction is [E2 ubiquitin-conjugating enzyme]-S-ubiquitinyl-L-cysteine + [acceptor protein]-L-lysine = [E2 ubiquitin-conjugating enzyme]-L-cysteine + [acceptor protein]-N(6)-ubiquitinyl-L-lysine.. It participates in protein modification; protein ubiquitination. In terms of biological role, might act as an E3 ubiquitin-protein ligase, or as part of E3 complex, which accepts ubiquitin from specific E2 ubiquitin-conjugating enzymes and then transfers it to substrates. This is Probable E3 ubiquitin-protein ligase ARI15 (ARI15) from Arabidopsis thaliana (Mouse-ear cress).